The following is a 122-amino-acid chain: Large ribosomal subunit protein uL14 (122 aa).

This sequence belongs to the universal ribosomal protein uL14 family. As to quaternary structure, part of the 50S ribosomal subunit. Forms a cluster with proteins L3 and L19. In the 70S ribosome, L14 and L19 interact and together make contacts with the 16S rRNA in bridges B5 and B8.

Its function is as follows. Binds to 23S rRNA. Forms part of two intersubunit bridges in the 70S ribosome. The protein is Large ribosomal subunit protein uL14 of Lactobacillus gasseri (strain ATCC 33323 / DSM 20243 / BCRC 14619 / CIP 102991 / JCM 1131 / KCTC 3163 / NCIMB 11718 / NCTC 13722 / AM63).